We begin with the raw amino-acid sequence, 309 residues long: GTP cyclohydrolase MptA (309 aa).

It belongs to the GTP cyclohydrolase IV family. Homodimer. The cofactor is Fe(2+).

The enzyme catalyses GTP + H2O = 7,8-dihydroneopterin 2',3'-cyclic phosphate + formate + diphosphate + H(+). The protein operates within cofactor biosynthesis; 5,6,7,8-tetrahydromethanopterin biosynthesis. Its function is as follows. Converts GTP to 7,8-dihydro-D-neopterin 2',3'-cyclic phosphate, the first intermediate in the biosynthesis of coenzyme methanopterin. This Haloarcula marismortui (strain ATCC 43049 / DSM 3752 / JCM 8966 / VKM B-1809) (Halobacterium marismortui) protein is GTP cyclohydrolase MptA.